The primary structure comprises 239 residues: Ubiquinone biosynthesis O-methyltransferase (239 aa).

S-adenosyl-L-methionine is bound by residues arginine 44, glycine 63, aspartate 84, and methionine 128.

It belongs to the methyltransferase superfamily. UbiG/COQ3 family.

It catalyses the reaction a 3-demethylubiquinol + S-adenosyl-L-methionine = a ubiquinol + S-adenosyl-L-homocysteine + H(+). It carries out the reaction a 3-(all-trans-polyprenyl)benzene-1,2-diol + S-adenosyl-L-methionine = a 2-methoxy-6-(all-trans-polyprenyl)phenol + S-adenosyl-L-homocysteine + H(+). Its pathway is cofactor biosynthesis; ubiquinone biosynthesis. Functionally, O-methyltransferase that catalyzes the 2 O-methylation steps in the ubiquinone biosynthetic pathway. In Xanthomonas campestris pv. campestris (strain 8004), this protein is Ubiquinone biosynthesis O-methyltransferase.